The primary structure comprises 1160 residues: Protein GIGANTEA (1160 aa).

Over residues 158–169 (CSSTSDQASSCE) the composition is skewed to polar residues. Disordered regions lie at residues 158-188 (CSST…RKPL), 600-629 (GGSK…RNRC), and 800-830 (PVKK…SRSH). Residues 170–187 (SMEKRANGSPRNEPDRKP) show a composition bias toward basic and acidic residues. The segment covering 801-812 (VKKDEPPIEEKN) has biased composition (basic and acidic residues).

Belongs to the GIGANTEA family.

Its subcellular location is the nucleus. Its function is as follows. Involved in regulation of circadian rhythm, and in the control of the photoperiodic flowering. Acts as a suppressor of flowering under short-day (SD) and long-day (LD) conditions. Activates Hd1/CONSTANS gene. The chain is Protein GIGANTEA (GI) from Oryza sativa subsp. japonica (Rice).